Here is a 132-residue protein sequence, read N- to C-terminus: Bleomycin resistance protein (132 aa).

One can recognise a VOC domain in the interval 1-129 (MLQSIPALPV…DNNLISFFQQ (129 aa)).

Belongs to the bleomycin resistance protein family.

Its function is as follows. Binding protein with a strong affinity to the bleomycin family of antibiotics. This chain is Bleomycin resistance protein (bleO), found in Geobacillus stearothermophilus (Bacillus stearothermophilus).